The sequence spans 532 residues: Intercellular adhesion molecule 1 (532 aa).

The N-terminal stretch at 1-27 (MAPSGPQPALPILVVLLGALLLGPGNA) is a signal peptide. The Extracellular portion of the chain corresponds to 28 to 480 (QTSVFPPEVI…TVNVLSPRYE (453 aa)). 2 Ig-like C2-type domains span residues 41 to 103 (GGSV…QSSA) and 128 to 193 (GKNL…LDLR). N-linked (GlcNAc...) asparagine glycosylation occurs at N47. 2 cysteine pairs are disulfide-bonded: C48-C92 and C52-C96. N-linked (GlcNAc...) asparagine glycans are attached at residues N130 and N145. Cysteines 135 and 186 form a disulfide. The Cell attachment site; atypical signature appears at 152–154 (RGE). Residues N183, N202, N267, N296, and N316 are each glycosylated (N-linked (GlcNAc...) asparagine). In terms of domain architecture, Ig-like C2-type 3 spans 230-297 (DTQGTVVCSL…LLCGVMLGNQ (68 aa)). A disulfide bridge links C237 with C290. Residues 325–378 (GTEVIVECEAHPRAKVMLNGVPAQPPGPRAQFLLKATPEDNGRSFSCSATLEVA) form the Ig-like C2-type 4 domain. The cysteines at positions 332 and 371 are disulfide-linked. Residues N385 and N406 are each glycosylated (N-linked (GlcNAc...) asparagine). Intrachain disulfides connect C403–C419, C419–C457, and C431–C457. An Ig-like C2-type 5 domain is found at 412 to 464 (NSQQTPMCQAWGNPLPQLKCLKDGTFPLPIGQSVTVTRDLEGTYLCQARSTRG). A helical transmembrane segment spans residues 481 to 503 (VVIIPVVAAAVILGTAGVATYLY). Residues 504-532 (NRQRKIRKYRLQQAQNGTPMKPNTQATPP) lie on the Cytoplasmic side of the membrane. Positions 513-532 (RLQQAQNGTPMKPNTQATPP) are disordered. Residues 515–532 (QQAQNGTPMKPNTQATPP) show a composition bias toward polar residues. Phosphothreonine occurs at positions 521 and 530.

Belongs to the immunoglobulin superfamily. ICAM family. As to quaternary structure, homodimer. Interacts with MUC1 and promotes cell aggregation in epithelial cells. Interacts with ARHGEF26/SGEF. Interacts (on T cell side) with CD81, CD247 and CD9 at immunological synapses between antigen-presenting cells and T cells. Post-translationally, monoubiquitinated, which is promoted by MARCH9 and leads to endocytosis.

It localises to the membrane. In terms of biological role, ICAM proteins are ligands for the leukocyte adhesion protein LFA-1 (integrin alpha-L/beta-2). During leukocyte trans-endothelial migration, ICAM1 engagement promotes the assembly of endothelial apical cups through ARHGEF26/SGEF and RHOG activation. The polypeptide is Intercellular adhesion molecule 1 (ICAM1) (Macaca mulatta (Rhesus macaque)).